The sequence spans 197 residues: Protein GrpE (197 aa).

Over residues 1-12 the composition is skewed to basic and acidic residues; sequence MTDSDGKTDKSG. A disordered region spans residues 1–35; sequence MTDSDGKTDKSGEPAAEVEPVVSKPYVMPDDPEDD.

The protein belongs to the GrpE family. As to quaternary structure, homodimer.

It localises to the cytoplasm. Functionally, participates actively in the response to hyperosmotic and heat shock by preventing the aggregation of stress-denatured proteins, in association with DnaK and GrpE. It is the nucleotide exchange factor for DnaK and may function as a thermosensor. Unfolded proteins bind initially to DnaJ; upon interaction with the DnaJ-bound protein, DnaK hydrolyzes its bound ATP, resulting in the formation of a stable complex. GrpE releases ADP from DnaK; ATP binding to DnaK triggers the release of the substrate protein, thus completing the reaction cycle. Several rounds of ATP-dependent interactions between DnaJ, DnaK and GrpE are required for fully efficient folding. This chain is Protein GrpE, found in Nitrobacter winogradskyi (strain ATCC 25391 / DSM 10237 / CIP 104748 / NCIMB 11846 / Nb-255).